The sequence spans 459 residues: uncharacterized protein (459 aa).

The TRAM domain maps to 5-63 (PVEEGQKFPLTIRRMGINGEGIGYFKKAVVFVPGAITGEEVVVEAVKVRDRFTEAKLNK). Cys76, Cys82, Cys85, and Cys166 together coordinate [4Fe-4S] cluster. 4 residues coordinate S-adenosyl-L-methionine: Gln290, Tyr319, Asp340, and Asp388. Catalysis depends on Cys415, which acts as the Nucleophile.

This sequence belongs to the class I-like SAM-binding methyltransferase superfamily. RNA M5U methyltransferase family.

This is an uncharacterized protein from Listeria monocytogenes serovar 1/2a (strain ATCC BAA-679 / EGD-e).